A 249-amino-acid polypeptide reads, in one-letter code: Hydroxyacylglutathione hydrolase (249 aa).

Zn(2+) contacts are provided by His-54, His-56, Asp-58, His-59, His-113, Asp-138, and His-176.

It belongs to the metallo-beta-lactamase superfamily. Glyoxalase II family. In terms of assembly, monomer. It depends on Zn(2+) as a cofactor.

It catalyses the reaction an S-(2-hydroxyacyl)glutathione + H2O = a 2-hydroxy carboxylate + glutathione + H(+). The protein operates within secondary metabolite metabolism; methylglyoxal degradation; (R)-lactate from methylglyoxal: step 2/2. In terms of biological role, thiolesterase that catalyzes the hydrolysis of S-D-lactoyl-glutathione to form glutathione and D-lactic acid. In Synechococcus sp. (strain CC9605), this protein is Hydroxyacylglutathione hydrolase.